Reading from the N-terminus, the 521-residue chain is Ribonuclease Y (521 aa).

A helical membrane pass occupies residues 5–25 (MMTMILAVIAAAIGFLIGNLL). Residues 211 to 271 (TVSVVALPSD…VRREVAKLSL (61 aa)) enclose the KH domain. The HD domain occupies 337–430 (VYQHSLEVAF…VQAADALSGA (94 aa)).

Belongs to the RNase Y family.

The protein localises to the cell membrane. Its function is as follows. Endoribonuclease that initiates mRNA decay. This chain is Ribonuclease Y, found in Geotalea uraniireducens (strain Rf4) (Geobacter uraniireducens).